Here is a 550-residue protein sequence, read N- to C-terminus: Dihydroxy-acid dehydratase (550 aa).

Asp-78 lines the Mg(2+) pocket. Cys-119 is a [2Fe-2S] cluster binding site. Residues Asp-120 and Lys-121 each contribute to the Mg(2+) site. N6-carboxylysine is present on Lys-121. Residue Cys-191 coordinates [2Fe-2S] cluster. Residue Glu-440 coordinates Mg(2+). The Proton acceptor role is filled by Ser-466.

Belongs to the IlvD/Edd family. As to quaternary structure, homodimer. [2Fe-2S] cluster is required as a cofactor. Mg(2+) serves as cofactor.

It carries out the reaction (2R)-2,3-dihydroxy-3-methylbutanoate = 3-methyl-2-oxobutanoate + H2O. The catalysed reaction is (2R,3R)-2,3-dihydroxy-3-methylpentanoate = (S)-3-methyl-2-oxopentanoate + H2O. It functions in the pathway amino-acid biosynthesis; L-isoleucine biosynthesis; L-isoleucine from 2-oxobutanoate: step 3/4. Its pathway is amino-acid biosynthesis; L-valine biosynthesis; L-valine from pyruvate: step 3/4. Functionally, functions in the biosynthesis of branched-chain amino acids. Catalyzes the dehydration of (2R,3R)-2,3-dihydroxy-3-methylpentanoate (2,3-dihydroxy-3-methylvalerate) into 2-oxo-3-methylpentanoate (2-oxo-3-methylvalerate) and of (2R)-2,3-dihydroxy-3-methylbutanoate (2,3-dihydroxyisovalerate) into 2-oxo-3-methylbutanoate (2-oxoisovalerate), the penultimate precursor to L-isoleucine and L-valine, respectively. This chain is Dihydroxy-acid dehydratase, found in Methanococcus maripaludis (strain DSM 14266 / JCM 13030 / NBRC 101832 / S2 / LL).